Consider the following 341-residue polypeptide: Tetraacyldisaccharide 4'-kinase (341 aa).

An ATP-binding site is contributed by 54-61 (TVGGAGKT).

Belongs to the LpxK family.

The enzyme catalyses a lipid A disaccharide + ATP = a lipid IVA + ADP + H(+). It functions in the pathway glycolipid biosynthesis; lipid IV(A) biosynthesis; lipid IV(A) from (3R)-3-hydroxytetradecanoyl-[acyl-carrier-protein] and UDP-N-acetyl-alpha-D-glucosamine: step 6/6. Functionally, transfers the gamma-phosphate of ATP to the 4'-position of a tetraacyldisaccharide 1-phosphate intermediate (termed DS-1-P) to form tetraacyldisaccharide 1,4'-bis-phosphate (lipid IVA). This Brucella anthropi (strain ATCC 49188 / DSM 6882 / CCUG 24695 / JCM 21032 / LMG 3331 / NBRC 15819 / NCTC 12168 / Alc 37) (Ochrobactrum anthropi) protein is Tetraacyldisaccharide 4'-kinase.